The sequence spans 312 residues: MAKTSMKKMLEAGVHFGHRSRFWSPKMGRFIYGTRNGVHIINLEKTLPLFNDALNFASKITAVGRSILFVGTKRAASNIIKQEAMRCGMPYVNHRWLGGMMTNYKTIKVSIKRLKDLEFLAEENFNQFGKKEALMMTREMEKLERSLGGIKDLNDIPDVIFVIDIGVEKNAVAEAKKLHLPIIGIVDTNHSPEGIDYVIPGNDDSIRAIGYYAREIANAILEAKAATSTSIEKKVSVKKLETKKPGSKKTPIEQVPAKEEIIKTSIKEDKPETLNKIALNTMKKADLIAYAETQGVTINSTDTKAQTIEKLA.

This sequence belongs to the universal ribosomal protein uS2 family.

The sequence is that of Small ribosomal subunit protein uS2 from Ruthia magnifica subsp. Calyptogena magnifica.